The following is a 167-amino-acid chain: HTH-type transcriptional repressor IacR (167 aa).

Polar residues predominate over residues 1-10 (MSNAKNTSAA). Residues 1–25 (MSNAKNTSAASPARKGHSHHDPASD) are disordered. Positions 30-162 (EDFPFYWLAR…LNRMLEVVFH (133 aa)) constitute an HTH marR-type domain. Positions 76-99 (ISEISTHAIAKLSTITKIVYRMKE) form a DNA-binding region, H-T-H motif.

With respect to regulation, exposure to indole-3-acetic acid (IAA) probably relieves the repressor activity. In terms of biological role, probably acts as a repressor of iacA expression. This chain is HTH-type transcriptional repressor IacR, found in Pseudomonas putida (Arthrobacter siderocapsulatus).